A 199-amino-acid polypeptide reads, in one-letter code: Acireductone dioxygenase 3 (199 aa).

Positions 99, 101, 105, and 144 each coordinate Fe(2+). His99, His101, Glu105, and His144 together coordinate Ni(2+).

This sequence belongs to the acireductone dioxygenase (ARD) family. Requires Fe(2+) as cofactor. It depends on Ni(2+) as a cofactor.

It is found in the cytoplasm. Its subcellular location is the nucleus. The catalysed reaction is 1,2-dihydroxy-5-(methylsulfanyl)pent-1-en-3-one + O2 = 4-methylsulfanyl-2-oxobutanoate + formate + 2 H(+). It carries out the reaction 1,2-dihydroxy-5-(methylsulfanyl)pent-1-en-3-one + O2 = 3-(methylsulfanyl)propanoate + CO + formate + 2 H(+). It functions in the pathway amino-acid biosynthesis; L-methionine biosynthesis via salvage pathway; L-methionine from S-methyl-5-thio-alpha-D-ribose 1-phosphate: step 5/6. Its function is as follows. Catalyzes 2 different reactions between oxygen and the acireductone 1,2-dihydroxy-3-keto-5-methylthiopentene (DHK-MTPene) depending upon the metal bound in the active site. Fe-containing acireductone dioxygenase (Fe-ARD) produces formate and 2-keto-4-methylthiobutyrate (KMTB), the alpha-ketoacid precursor of methionine in the methionine recycle pathway. Ni-containing acireductone dioxygenase (Ni-ARD) produces methylthiopropionate, carbon monoxide and formate, and does not lie on the methionine recycle pathway. The sequence is that of Acireductone dioxygenase 3 (ARD3) from Arabidopsis thaliana (Mouse-ear cress).